The primary structure comprises 503 residues: Protein-cysteine N-palmitoyltransferase HHAT-like protein (503 aa).

8 helical membrane passes run 12-31, 65-87, 100-122, 127-149, 250-272, 287-309, 426-445, and 460-482; these read LGLYSLVLSGALAYAGRGLL, WVMWFTNFRNVIVFALSGHVLFA, WMYAVYGVLAVVGTMGPWYLLLL, MVLYVASLLGQRWLCLALGLASL, AGLSAAAIVAVDVFFHFFYILTI, LAGLAYSNLVYDWVKAAVLFGVV, VRALCGAVNFWAIIMYNLVS, and ILTGFPQTTLAVLFVTYCGVQLV.

It belongs to the membrane-bound acyltransferase family. HHAT subfamily. Interacts with SHH.

The protein localises to the endoplasmic reticulum membrane. Its function is as follows. Negatively regulates N-terminal palmitoylation of SHH by HHAT/SKN. The sequence is that of Protein-cysteine N-palmitoyltransferase HHAT-like protein (Hhatl) from Mus musculus (Mouse).